The sequence spans 135 residues: Holo-[acyl-carrier-protein] synthase (135 aa).

2 residues coordinate Mg(2+): aspartate 7 and glutamate 57.

It belongs to the P-Pant transferase superfamily. AcpS family. The cofactor is Mg(2+).

The protein resides in the cytoplasm. The catalysed reaction is apo-[ACP] + CoA = holo-[ACP] + adenosine 3',5'-bisphosphate + H(+). In terms of biological role, transfers the 4'-phosphopantetheine moiety from coenzyme A to a Ser of acyl-carrier-protein. The protein is Holo-[acyl-carrier-protein] synthase of Corynebacterium glutamicum (strain R).